The chain runs to 84 residues: uncharacterized protein (84 aa).

The protein belongs to the csb family.

This is an uncharacterized protein from Dictyostelium discoideum (Social amoeba).